The chain runs to 203 residues: DNA-directed RNA polymerase subunit gamma (203 aa).

Zn(2+) contacts are provided by Cys34, Cys36, Cys49, and Cys52.

The protein belongs to the RNA polymerase beta' chain family. RpoC1 subfamily. In cyanobacteria the RNAP catalytic core is composed of 2 alpha, 1 beta, 1 beta', 1 gamma and 1 omega subunit. When a sigma factor is associated with the core the holoenzyme is formed, which can initiate transcription. Zn(2+) serves as cofactor.

The catalysed reaction is RNA(n) + a ribonucleoside 5'-triphosphate = RNA(n+1) + diphosphate. In terms of biological role, DNA-dependent RNA polymerase catalyzes the transcription of DNA into RNA using the four ribonucleoside triphosphates as substrates. The polypeptide is DNA-directed RNA polymerase subunit gamma (rpoC1) (Prochloron sp).